The sequence spans 779 residues: Nucleolar complex protein 3 homolog (779 aa).

Disordered regions lie at residues 1–20 and 100–189; these read MGFA…TNKT and NAKR…SHLS. The span at 114–124 shows a compositional bias: acidic residues; sequence DSDEDEDEDDV. Residues 136–160 show a composition bias toward basic and acidic residues; the sequence is EEGHEELLPIKLKDGTLIRPTREKE. The segment covering 161–178 has biased composition (acidic residues); sequence VEEQEEEEKSDIDEGEED. Residues 434–474 adopt a coiled-coil conformation; that stretch reads AKKYQIKKERASKTAKKYKKQLARLEADLLEVEAEESLTKK.

It belongs to the CBF/MAK21 family.

It localises to the nucleus. It is found in the nucleolus. This is Nucleolar complex protein 3 homolog from Caenorhabditis briggsae.